Reading from the N-terminus, the 863-residue chain is Leucine--tRNA ligase (863 aa).

Residues 42–52 carry the 'HIGH' region motif; the sequence is PYPSGRLHMGH. Residues 622–626 carry the 'KMSKS' region motif; sequence KMSKS. Lysine 625 lines the ATP pocket.

It belongs to the class-I aminoacyl-tRNA synthetase family.

The protein resides in the cytoplasm. It catalyses the reaction tRNA(Leu) + L-leucine + ATP = L-leucyl-tRNA(Leu) + AMP + diphosphate. The protein is Leucine--tRNA ligase of Shewanella denitrificans (strain OS217 / ATCC BAA-1090 / DSM 15013).